We begin with the raw amino-acid sequence, 84 residues long: Large ribosomal subunit protein bL31B (84 aa).

The protein belongs to the bacterial ribosomal protein bL31 family. Type B subfamily. Part of the 50S ribosomal subunit.

The sequence is that of Large ribosomal subunit protein bL31B from Acinetobacter baumannii (strain AB307-0294).